Reading from the N-terminus, the 584-residue chain is uncharacterized protein (584 aa).

The helical transmembrane segment at 15–35 (FIFFVLVFFICIIFGCIYESL) threads the bilayer. 2 stretches are compositionally biased toward polar residues: residues 184-194 (DVSTENSYTHN) and 204-225 (GKRT…SYNI). The tract at residues 184 to 226 (DVSTENSYTHNNSRDDEPQNGKRTYNNQSNNNLPYDNSSYNIS) is disordered. Coiled-coil stretches lie at residues 267–319 (DNYP…DNYP) and 436–477 (RDNH…HYKR).

The protein resides in the membrane. This is an uncharacterized protein from Plasmodium falciparum (isolate 3D7).